A 595-amino-acid chain; its full sequence is DNA mismatch repair protein MutL (595 aa).

The protein belongs to the DNA mismatch repair MutL/HexB family.

Its function is as follows. This protein is involved in the repair of mismatches in DNA. It is required for dam-dependent methyl-directed DNA mismatch repair. May act as a 'molecular matchmaker', a protein that promotes the formation of a stable complex between two or more DNA-binding proteins in an ATP-dependent manner without itself being part of a final effector complex. The chain is DNA mismatch repair protein MutL from Rhodopseudomonas palustris (strain ATCC BAA-98 / CGA009).